Reading from the N-terminus, the 698-residue chain is Elongation factor G 1 (698 aa).

The 283-residue stretch at 8–290 folds into the tr-type G domain; the sequence is ERYRNIGIVA…AVVDYLPAPI (283 aa). Residues 17–24, 88–92, and 142–145 contribute to the GTP site; these read AHVDAGKT, DTPGH, and NKMD.

The protein belongs to the TRAFAC class translation factor GTPase superfamily. Classic translation factor GTPase family. EF-G/EF-2 subfamily.

The protein localises to the cytoplasm. Functionally, catalyzes the GTP-dependent ribosomal translocation step during translation elongation. During this step, the ribosome changes from the pre-translocational (PRE) to the post-translocational (POST) state as the newly formed A-site-bound peptidyl-tRNA and P-site-bound deacylated tRNA move to the P and E sites, respectively. Catalyzes the coordinated movement of the two tRNA molecules, the mRNA and conformational changes in the ribosome. The protein is Elongation factor G 1 of Shewanella denitrificans (strain OS217 / ATCC BAA-1090 / DSM 15013).